The sequence spans 170 residues: Transcription factor E (170 aa).

Residues 1-93 form the HTH TFE/IIEalpha-type domain; it reads MKEAYLYIVE…TWYVDDDVIR (93 aa).

Belongs to the TFE family. Monomer. Interaction with RNA polymerase subunits RpoF and RpoE is necessary for Tfe stimulatory transcription activity. Able to interact with Tbp and RNA polymerase in the absence of DNA promoter. Interacts both with the preinitiation and elongation complexes.

In terms of biological role, transcription factor that plays a role in the activation of archaeal genes transcribed by RNA polymerase. Facilitates transcription initiation by enhancing TATA-box recognition by TATA-box-binding protein (Tbp), and transcription factor B (Tfb) and RNA polymerase recruitment. Not absolutely required for transcription in vitro, but particularly important in cases where Tbp or Tfb function is not optimal. It dynamically alters the nucleic acid-binding properties of RNA polymerases by stabilizing the initiation complex and destabilizing elongation complexes. Seems to translocate with the RNA polymerase following initiation and acts by binding to the non template strand of the transcription bubble in elongation complexes. The protein is Transcription factor E of Pyrobaculum neutrophilum (strain DSM 2338 / JCM 9278 / NBRC 100436 / V24Sta) (Thermoproteus neutrophilus).